The sequence spans 524 residues: Glucose-6-phosphate 1-dehydrogenase (524 aa).

Serine 20 bears the Phosphoserine mark. NADP(+)-binding positions include 42–49 (GASGDLAK), arginine 76, and lysine 175. D-glucose 6-phosphate-binding positions include lysine 175, 205–209 (HYLGK), glutamate 243, and aspartate 262. Catalysis depends on histidine 267, which acts as the Proton acceptor. Position 362 (arginine 362) interacts with NADP(+). Residues lysine 365 and arginine 370 each contribute to the D-glucose 6-phosphate site. Residues lysine 371, arginine 375, and arginine 398 each coordinate NADP(+). Position 400 (glutamine 400) interacts with D-glucose 6-phosphate. Residues 406-408 (YFK), 426-428 (DLT), arginine 492, tyrosine 508, and tryptophan 514 contribute to the NADP(+) site.

This sequence belongs to the glucose-6-phosphate dehydrogenase family.

It is found in the cytoplasm. The protein localises to the cytosol. It catalyses the reaction D-glucose 6-phosphate + NADP(+) = 6-phospho-D-glucono-1,5-lactone + NADPH + H(+). It functions in the pathway carbohydrate degradation; pentose phosphate pathway; D-ribulose 5-phosphate from D-glucose 6-phosphate (oxidative stage): step 1/3. Its function is as follows. Cytosolic glucose-6-phosphate dehydrogenase that catalyzes the first and rate-limiting step of the oxidative branch within the pentose phosphate pathway/shunt, an alternative route to glycolysis for the dissimilation of carbohydrates and a major source of reducing power and metabolic intermediates for fatty acid and nucleic acid biosynthetic processes. This chain is Glucose-6-phosphate 1-dehydrogenase, found in Drosophila melanogaster (Fruit fly).